The primary structure comprises 479 residues: Dynein regulatory complex subunit 4 (479 aa).

Coiled-coil stretches lie at residues 28–93, 117–170, and 210–347; these read RDQL…LADI, RAEA…FNEK, and EVEE…GLKE.

This sequence belongs to the DRC4 family.

Its subcellular location is the cytoplasm. The protein resides in the cytoskeleton. It is found in the flagellum basal body. In terms of biological role, cytoskeletal linker which probably functions in axonemal and non-axonemal dynein regulation. May play a role in the spermatozoa motility. This chain is Dynein regulatory complex subunit 4, found in Drosophila melanogaster (Fruit fly).